Consider the following 66-residue polypeptide: Alpha-like toxin Bom3 (66 aa).

The LCN-type CS-alpha/beta domain occupies 2–66 (RDGYIAQPEN…PIVVGGEKCH (65 aa)). Cystine bridges form between Cys12–Cys65, Cys16–Cys37, Cys23–Cys47, and Cys27–Cys49.

The protein belongs to the long (4 C-C) scorpion toxin superfamily. Sodium channel inhibitor family. Alpha subfamily. Expressed by the venom gland.

The protein localises to the secreted. Functionally, alpha toxins bind voltage-independently at site-3 of sodium channels (Nav) and inhibit the inactivation of the activated channels, thereby blocking neuronal transmission. As it competes neither with the classical alpha-toxin AaH2 nor the beta-toxin Css2, this toxin is an alpha-like toxin. This Buthus occitanus mardochei (Moroccan scorpion) protein is Alpha-like toxin Bom3.